The following is a 357-amino-acid chain: Isopentenyl-diphosphate delta-isomerase (357 aa).

Residue 12–13 (RK) coordinates substrate. Residues Ser70, 71-73 (SMT), Ser101, and Asn130 contribute to the FMN site. Residue 101-103 (SMR) coordinates substrate. Gln165 provides a ligand contact to substrate. Glu166 contacts Mg(2+). FMN-binding positions include Lys197, 289-291 (GIR), and 310-311 (AQ).

The protein belongs to the IPP isomerase type 2 family. As to quaternary structure, homooctamer. Dimer of tetramers. The cofactor is FMN. It depends on NADPH as a cofactor. Mg(2+) serves as cofactor.

The protein resides in the cytoplasm. The enzyme catalyses isopentenyl diphosphate = dimethylallyl diphosphate. Functionally, involved in the biosynthesis of isoprenoids. Catalyzes the 1,3-allylic rearrangement of the homoallylic substrate isopentenyl (IPP) to its allylic isomer, dimethylallyl diphosphate (DMAPP). This chain is Isopentenyl-diphosphate delta-isomerase, found in Chlorobaculum parvum (strain DSM 263 / NCIMB 8327) (Chlorobium vibrioforme subsp. thiosulfatophilum).